A 589-amino-acid polypeptide reads, in one-letter code: Sentrin-specific protease 2 (589 aa).

Residues 28-31 (KRRR) carry the Nuclear localization signal motif. A Phosphoserine modification is found at Ser32. The short motif at 46–51 (PAKRPR) is the Nuclear localization signal element. A disordered region spans residues 155–176 (SEGCNRRPGGRRHSKGNPESSL). The Nuclear export signal motif lies at 317–332 (LEPDLSEEVSARLRLG). 2 positions are modified to phosphoserine: Ser333 and Ser344. The tract at residues 396–560 (RITRGDIQTL…FTCKYADYIS (165 aa)) is protease. Active-site residues include His478 and Asp495. Cys548 serves as the catalytic Nucleophile.

This sequence belongs to the peptidase C48 family. In terms of assembly, binds to SUMO2 and SUMO3. Interacts with the C-terminal domain of NUP153 via its N-terminus. Interacts with MTA1. Post-translationally, polyubiquitinated; which leads to proteasomal degradation.

The protein resides in the nucleus. The protein localises to the nuclear pore complex. Its subcellular location is the nucleus membrane. It is found in the cytoplasm. In terms of biological role, protease that catalyzes two essential functions in the SUMO pathway. The first is the hydrolysis of an alpha-linked peptide bond at the C-terminal end of the small ubiquitin-like modifier (SUMO) propeptides, SUMO1, SUMO2 and SUMO3 leading to the mature form of the proteins. The second is the deconjugation of SUMO1, SUMO2 and SUMO3 from targeted proteins, by cleaving an epsilon-linked peptide bond between the C-terminal glycine of the mature SUMO and the lysine epsilon-amino group of the target protein. May down-regulate CTNNB1 levels and thereby modulate the Wnt pathway. Deconjugates SUMO2 from MTA1. Plays a dynamic role in adipogenesis by desumoylating and promoting the stabilization of CEBPB. Acts as a regulator of the cGAS-STING pathway by catalyzing desumoylation of CGAS and STING1 during the late phase of viral infection. This chain is Sentrin-specific protease 2, found in Homo sapiens (Human).